Consider the following 131-residue polypeptide: Phosphoribosyl-AMP cyclohydrolase (131 aa).

Asp78 is a Mg(2+) binding site. Residue Cys79 participates in Zn(2+) binding. Mg(2+) contacts are provided by Asp80 and Asp82. Zn(2+) is bound by residues Cys96 and Cys103.

Belongs to the PRA-CH family. As to quaternary structure, homodimer. It depends on Mg(2+) as a cofactor. Requires Zn(2+) as cofactor.

The protein localises to the cytoplasm. It catalyses the reaction 1-(5-phospho-beta-D-ribosyl)-5'-AMP + H2O = 1-(5-phospho-beta-D-ribosyl)-5-[(5-phospho-beta-D-ribosylamino)methylideneamino]imidazole-4-carboxamide. It functions in the pathway amino-acid biosynthesis; L-histidine biosynthesis; L-histidine from 5-phospho-alpha-D-ribose 1-diphosphate: step 3/9. Catalyzes the hydrolysis of the adenine ring of phosphoribosyl-AMP. In Neisseria meningitidis serogroup A / serotype 4A (strain DSM 15465 / Z2491), this protein is Phosphoribosyl-AMP cyclohydrolase.